The sequence spans 153 residues: Proline-rich membrane anchor 1 (153 aa).

The signal sequence occupies residues 1-35 (MLLRDLVLRHGCCWPSLLLHCALHPLWGLVQVTHA). Over 36–92 (EPQKSCSKVTDSCQHICQCRPPPPLPPPPPPPPPPRLLSAPAPNSTSCPAEDSWWSG) the chain is Extracellular. In terms of domain architecture, PRAD spans 56–70 (PPPPLPPPPPPPPPP). The span at 59–71 (PLPPPPPPPPPPR) shows a compositional bias: pro residues. The tract at residues 59 to 79 (PLPPPPPPPPPPRLLSAPAPN) is disordered. Residue N79 is glycosylated (N-linked (GlcNAc...) asparagine). The helical transmembrane segment at 93-113 (LVIIVAVVCASLVFLTVLVII) threads the bilayer. The Cytoplasmic portion of the chain corresponds to 114–153 (CYKAIKRKPLRKDENGASVAEYPMSSSPSNKGVDVNAAVV). A disordered region spans residues 133-153 (AEYPMSSSPSNKGVDVNAAVV).

Interacts with ACHE, probably through disulfide bonds. In terms of tissue distribution, isoforms 1 and 2 are expressed in the adult brain. In matured cortical neurons, only isoform 1 is detectable.

The protein localises to the cell membrane. The protein resides in the cell junction. It localises to the synapse. Its function is as follows. Required to anchor acetylcholinesterase (ACHE) to the basal lamina of the neuromuscular junction and to the membrane of neuronal synapses in brain. Organizes ACHE into tetramers. This chain is Proline-rich membrane anchor 1 (Prima1), found in Rattus norvegicus (Rat).